A 430-amino-acid chain; its full sequence is Asparagine--tRNA ligase (430 aa).

The protein belongs to the class-II aminoacyl-tRNA synthetase family. In terms of assembly, homodimer.

It is found in the cytoplasm. The enzyme catalyses tRNA(Asn) + L-asparagine + ATP = L-asparaginyl-tRNA(Asn) + AMP + diphosphate + H(+). This is Asparagine--tRNA ligase from Staphylococcus aureus (strain MW2).